Here is a 354-residue protein sequence, read N- to C-terminus: tRNA N6-adenosine threonylcarbamoyltransferase (354 aa).

Fe cation contacts are provided by His115 and His119. Residues 138 to 142 (LVSGG), Asp171, Gly184, and Asn276 contribute to the substrate site. Asp304 serves as a coordination point for Fe cation.

It belongs to the KAE1 / TsaD family. Requires Fe(2+) as cofactor.

Its subcellular location is the cytoplasm. It carries out the reaction L-threonylcarbamoyladenylate + adenosine(37) in tRNA = N(6)-L-threonylcarbamoyladenosine(37) in tRNA + AMP + H(+). Its function is as follows. Required for the formation of a threonylcarbamoyl group on adenosine at position 37 (t(6)A37) in tRNAs that read codons beginning with adenine. Is involved in the transfer of the threonylcarbamoyl moiety of threonylcarbamoyl-AMP (TC-AMP) to the N6 group of A37, together with TsaE and TsaB. TsaD likely plays a direct catalytic role in this reaction. The sequence is that of tRNA N6-adenosine threonylcarbamoyltransferase from Xanthomonas oryzae pv. oryzae (strain MAFF 311018).